Reading from the N-terminus, the 381-residue chain is Beta-1,4-galactosyltransferase 5 (381 aa).

The Cytoplasmic portion of the chain corresponds to 1-11; it reads MPTHLRFRRRS. Residues 12–32 form a helical; Signal-anchor for type II membrane protein membrane-spanning segment; the sequence is FLGLLFLFSLSTSALYFIYSA. Residues 33–381 lie on the Lumenal side of the membrane; sequence PGIVNEYLFM…SRDLAPVADY (349 aa). Residues N73, N82, and N120 are each glycosylated (N-linked (GlcNAc...) asparagine). A disulfide bridge links C106 with C151. UDP-alpha-D-galactose contacts are provided by residues 162 to 166, 201 to 203, 228 to 229, Y257, and W289; these read PFRNR, FNR, and VD. Cysteines 222 and 241 form a disulfide. D229 is a binding site for Mn(2+). 291 to 294 is a binding site for N-acetyl-D-glucosamine; that stretch reads GEDD. Position 322 (H322) interacts with Mn(2+). 322–323 contributes to the UDP-alpha-D-galactose binding site; it reads HH. R333 is a binding site for N-acetyl-D-glucosamine. The N-linked (GlcNAc...) asparagine glycan is linked to N366.

Belongs to the glycosyltransferase 7 family. The cofactor is Mn(2+).

Its subcellular location is the golgi apparatus. It localises to the golgi stack membrane. The catalysed reaction is a beta-D-glucosyl-(1&lt;-&gt;1')-N-acylsphing-4-enine + UDP-alpha-D-galactose = a beta-D-Gal-(1-&gt;4)-beta-D-Glc-(1&lt;-&gt;1)-Cer(d18:1(4E)) + UDP + H(+). The protein operates within protein modification; protein glycosylation. It participates in sphingolipid metabolism. In terms of biological role, catalyzes the synthesis of lactosylceramide (LacCer) via the transfer of galactose from UDP-galactose to glucosylceramide (GlcCer). Required for proper patterning of the dorsoventral axis during embryogenesis through the regulation of BMP signaling. Plays a role in proteoglycan glycosylation that is required for BMP-dependent specification of the dorsoventral axis. This is Beta-1,4-galactosyltransferase 5 (b4galt5) from Danio rerio (Zebrafish).